The sequence spans 211 residues: Imidazole glycerol phosphate synthase subunit HisH (211 aa).

The Glutamine amidotransferase type-1 domain occupies 4-211 (TVALLDYGSG…QLLRNWINHI (208 aa)). Catalysis depends on cysteine 82, which acts as the Nucleophile. Active-site residues include histidine 192 and glutamate 194.

Heterodimer of HisH and HisF.

The protein resides in the cytoplasm. The catalysed reaction is 5-[(5-phospho-1-deoxy-D-ribulos-1-ylimino)methylamino]-1-(5-phospho-beta-D-ribosyl)imidazole-4-carboxamide + L-glutamine = D-erythro-1-(imidazol-4-yl)glycerol 3-phosphate + 5-amino-1-(5-phospho-beta-D-ribosyl)imidazole-4-carboxamide + L-glutamate + H(+). It carries out the reaction L-glutamine + H2O = L-glutamate + NH4(+). The protein operates within amino-acid biosynthesis; L-histidine biosynthesis; L-histidine from 5-phospho-alpha-D-ribose 1-diphosphate: step 5/9. IGPS catalyzes the conversion of PRFAR and glutamine to IGP, AICAR and glutamate. The HisH subunit catalyzes the hydrolysis of glutamine to glutamate and ammonia as part of the synthesis of IGP and AICAR. The resulting ammonia molecule is channeled to the active site of HisF. This Corynebacterium efficiens (strain DSM 44549 / YS-314 / AJ 12310 / JCM 11189 / NBRC 100395) protein is Imidazole glycerol phosphate synthase subunit HisH.